Here is an 853-residue protein sequence, read N- to C-terminus: Wolframin (853 aa).

Positions 139–179 (KQLERKMRRIYNLQRKRRRRDDDRSSSSSEGEQEPECEPLE) are disordered. Residues 144-157 (KMRRIYNLQRKRRR) are compositionally biased toward basic residues. Over residues 169–179 (GEQEPECEPLE) the composition is skewed to acidic residues. Transmembrane regions (helical) follow at residues 238 to 258 (MIFH…NLIV), 259 to 279 (SIPN…ISWW), 285 to 305 (LPLV…CKML), 347 to 367 (LYFF…TDAW), 373 to 393 (LTII…YASS), 446 to 466 (FCLN…IMMA), 473 to 493 (GVYT…VCIA), 513 to 533 (IVLF…FVAI), 545 to 565 (WGST…LALN), and 572 to 592 (ITML…LPYM). N-linked (GlcNAc...) asparagine glycosylation is found at Asn694 and Asn769.

In terms of tissue distribution, detected in adult brain.

The protein localises to the membrane. It is found in the endoplasmic reticulum. It localises to the mitochondrion. Its function is as follows. Participates in the regulation of cellular Ca(2+) homeostasis, at least partly, by modulating the filling state of the endoplasmic reticulum Ca(2+) store. In neurons and glial cells, has a role in maintaining neuronal function and integrity during aging. The sequence is that of Wolframin from Drosophila melanogaster (Fruit fly).